A 449-amino-acid chain; its full sequence is Glutathione reductase (449 aa).

S15, G16, E35, T42, C43, and K51 together coordinate FAD. S15 contributes to the glutathione binding site. C43 and C48 are joined by a disulfide. Y99 serves as a coordination point for glutathione. Residue A115 participates in FAD binding. Residues G175, I178, E181, R198, R204, and G261 each coordinate NADP(+). 2 residues coordinate FAD: D302 and T310. Residue A340 coordinates NADP(+). H435 provides a ligand contact to FAD. The Proton acceptor role is filled by H435.

The protein belongs to the class-I pyridine nucleotide-disulfide oxidoreductase family. In terms of assembly, homodimer. FAD serves as cofactor.

It localises to the cytoplasm. It carries out the reaction 2 glutathione + NADP(+) = glutathione disulfide + NADPH + H(+). It functions in the pathway xenobiotic degradation; (2,4,5-trichlorophenoxy)acetate degradation. Functionally, catalyzes the reduction of glutathione disulfide (GSSG) to reduced glutathione (GSH). Constitutes the major mechanism to maintain a high GSH:GSSG ratio in the cytosol. This is Glutathione reductase (gor) from Burkholderia cepacia (Pseudomonas cepacia).